The sequence spans 154 residues: Ribosome maturation factor RimP (154 aa).

It belongs to the RimP family.

It is found in the cytoplasm. Required for maturation of 30S ribosomal subunits. The polypeptide is Ribosome maturation factor RimP (Cyanothece sp. (strain PCC 7425 / ATCC 29141)).